Here is a 391-residue protein sequence, read N- to C-terminus: Succinate--CoA ligase [ADP-forming] subunit beta (391 aa).

The 237-residue stretch at 9-245 folds into the ATP-grasp domain; that stretch reads KQIFAEYGVP…LSEEDPDEVE (237 aa). Residues K46, 53 to 55, E99, A102, and E107 contribute to the ATP site; that span reads GRG. Mg(2+)-binding residues include N200 and D214. Substrate contacts are provided by residues N265 and 322–324; that span reads GIV.

The protein belongs to the succinate/malate CoA ligase beta subunit family. Heterotetramer of two alpha and two beta subunits. Mg(2+) serves as cofactor.

The catalysed reaction is succinate + ATP + CoA = succinyl-CoA + ADP + phosphate. It carries out the reaction GTP + succinate + CoA = succinyl-CoA + GDP + phosphate. The protein operates within carbohydrate metabolism; tricarboxylic acid cycle; succinate from succinyl-CoA (ligase route): step 1/1. In terms of biological role, succinyl-CoA synthetase functions in the citric acid cycle (TCA), coupling the hydrolysis of succinyl-CoA to the synthesis of either ATP or GTP and thus represents the only step of substrate-level phosphorylation in the TCA. The beta subunit provides nucleotide specificity of the enzyme and binds the substrate succinate, while the binding sites for coenzyme A and phosphate are found in the alpha subunit. This is Succinate--CoA ligase [ADP-forming] subunit beta from Sulfurovum sp. (strain NBC37-1).